We begin with the raw amino-acid sequence, 282 residues long: Acetyl-coenzyme A carboxylase carboxyl transferase subunit beta (282 aa).

Residues 23-282 (IWTKCGQCDA…MLSKLHHQQA (260 aa)) enclose the CoA carboxyltransferase N-terminal domain. Zn(2+)-binding residues include C27, C30, C46, and C49. The segment at 27-49 (CGQCDAVLYKTELEKQLGVCPKC) adopts a C4-type zinc-finger fold.

The protein belongs to the AccD/PCCB family. In terms of assembly, acetyl-CoA carboxylase is a heterohexamer composed of biotin carboxyl carrier protein (AccB), biotin carboxylase (AccC) and two subunits each of ACCase subunit alpha (AccA) and ACCase subunit beta (AccD). Zn(2+) is required as a cofactor.

The protein resides in the cytoplasm. The catalysed reaction is N(6)-carboxybiotinyl-L-lysyl-[protein] + acetyl-CoA = N(6)-biotinyl-L-lysyl-[protein] + malonyl-CoA. Its pathway is lipid metabolism; malonyl-CoA biosynthesis; malonyl-CoA from acetyl-CoA: step 1/1. In terms of biological role, component of the acetyl coenzyme A carboxylase (ACC) complex. Biotin carboxylase (BC) catalyzes the carboxylation of biotin on its carrier protein (BCCP) and then the CO(2) group is transferred by the transcarboxylase to acetyl-CoA to form malonyl-CoA. This chain is Acetyl-coenzyme A carboxylase carboxyl transferase subunit beta, found in Pseudoalteromonas atlantica (strain T6c / ATCC BAA-1087).